The following is a 605-amino-acid chain: Sulfite reductase [NADPH] flavoprotein alpha-component (605 aa).

The Flavodoxin-like domain maps to 68–206; that stretch reads VTVLYGSQTG…PAAEWLEGVL (139 aa). Residues 74–78, 121–126, and 154–185 each bind FMN; these read SQTGN, STHGEG, and VLALGDSSYEFFCQTGKEFDQRLEELGGKRIS. The interval 213 to 234 is disordered; it reads GGGSAAPAPAAASQTGESSYSR. The region spanning 235-454 is the FAD-binding FR-type domain; it reads TNPFRAEVLE…VQHNQNFKLP (220 aa). 392 to 395 contributes to the FAD binding site; that stretch reads RLYS. NADP(+) is bound by residues aspartate 495 and 525 to 533; that span reads SRDTEEKVY.

Alpha(8)-beta(8). The alpha component is a flavoprotein, the beta component is a hemoprotein. It depends on FAD as a cofactor. Requires FMN as cofactor.

It carries out the reaction hydrogen sulfide + 3 NADP(+) + 3 H2O = sulfite + 3 NADPH + 4 H(+). The protein operates within sulfur metabolism; hydrogen sulfide biosynthesis; hydrogen sulfide from sulfite (NADPH route): step 1/1. In terms of biological role, component of the sulfite reductase complex that catalyzes the 6-electron reduction of sulfite to sulfide. This is one of several activities required for the biosynthesis of L-cysteine from sulfate. The flavoprotein component catalyzes the electron flow from NADPH -&gt; FAD -&gt; FMN to the hemoprotein component. The polypeptide is Sulfite reductase [NADPH] flavoprotein alpha-component (cysJ) (Bacillus subtilis (strain 168)).